The chain runs to 455 residues: L-serine dehydratase 2 (455 aa).

This sequence belongs to the iron-sulfur dependent L-serine dehydratase family. Requires [4Fe-4S] cluster as cofactor. Activated by post-translational modification by a system involving at least three gene products. Activation is mimicked in vitro by iron and dithiothreitol. There is considerable evidence for a free-radical activation mechanism.

The enzyme catalyses L-serine = pyruvate + NH4(+). It participates in carbohydrate biosynthesis; gluconeogenesis. Functionally, also deaminates threonine, particularly when it is present in high concentration. The protein is L-serine dehydratase 2 (sdaB) of Escherichia coli (strain K12).